A 396-amino-acid polypeptide reads, in one-letter code: Tryptophan synthase beta chain (396 aa).

Position 88 is an N6-(pyridoxal phosphate)lysine (Lys-88).

This sequence belongs to the TrpB family. Tetramer of two alpha and two beta chains. The cofactor is pyridoxal 5'-phosphate.

The catalysed reaction is (1S,2R)-1-C-(indol-3-yl)glycerol 3-phosphate + L-serine = D-glyceraldehyde 3-phosphate + L-tryptophan + H2O. It functions in the pathway amino-acid biosynthesis; L-tryptophan biosynthesis; L-tryptophan from chorismate: step 5/5. In terms of biological role, the beta subunit is responsible for the synthesis of L-tryptophan from indole and L-serine. This chain is Tryptophan synthase beta chain, found in Shewanella baltica (strain OS155 / ATCC BAA-1091).